A 526-amino-acid polypeptide reads, in one-letter code: Acetyl-CoA hydrolase (526 aa).

CoA is bound at residue 277–281 (GIGNI). The 5-glutamyl coenzyme A thioester intermediate role is filled by glutamate 302. Asparagine 392 and glycine 396 together coordinate CoA.

This sequence belongs to the acetyl-CoA hydrolase/transferase family.

It localises to the cytoplasm. It carries out the reaction acetyl-CoA + H2O = acetate + CoA + H(+). Its function is as follows. Presumably involved in regulating the intracellular acetyl-CoA pool for fatty acid and cholesterol synthesis and fatty acid oxidation. This is Acetyl-CoA hydrolase (ACH1) from Candida glabrata (strain ATCC 2001 / BCRC 20586 / JCM 3761 / NBRC 0622 / NRRL Y-65 / CBS 138) (Yeast).